A 510-amino-acid chain; its full sequence is 2-isopropylmalate synthase (510 aa).

Residues 5–267 form the Pyruvate carboxyltransferase domain; the sequence is LIIFDTTLRD…DTRIDSVHIV (263 aa). Residues aspartate 14, histidine 202, histidine 204, and asparagine 238 each coordinate Mn(2+). The regulatory domain stretch occupies residues 392–510; it reads KLLSLTAHSE…SKLERAHPQV (119 aa).

The protein belongs to the alpha-IPM synthase/homocitrate synthase family. LeuA type 1 subfamily. Homodimer. Mn(2+) is required as a cofactor.

It is found in the cytoplasm. It carries out the reaction 3-methyl-2-oxobutanoate + acetyl-CoA + H2O = (2S)-2-isopropylmalate + CoA + H(+). It participates in amino-acid biosynthesis; L-leucine biosynthesis; L-leucine from 3-methyl-2-oxobutanoate: step 1/4. In terms of biological role, catalyzes the condensation of the acetyl group of acetyl-CoA with 3-methyl-2-oxobutanoate (2-ketoisovalerate) to form 3-carboxy-3-hydroxy-4-methylpentanoate (2-isopropylmalate). This chain is 2-isopropylmalate synthase, found in Nitrosospira multiformis (strain ATCC 25196 / NCIMB 11849 / C 71).